The chain runs to 686 residues: Solute carrier family 22 member 23 (686 aa).

Disordered regions lie at residues 1–62 (MAID…GGGP) and 169–193 (GNRS…DKGD). Asparagine 24 is a glycosylation site (N-linked (GlcNAc...) asparagine). 2 helical membrane-spanning segments follow: residues 234–254 (FSLL…ADWV) and 258–278 (PVLL…ALSV). The N-linked (GlcNAc...) asparagine glycan is linked to asparagine 279. The next 8 membrane-spanning stretches (helical) occupy residues 288–308 (FFEG…RIEL), 315–335 (FMIT…MPGL), 344–364 (VLQA…SIFP), 467–487 (ADYY…CVVV), 494–514 (GGLL…LGLL), 538–558 (IAFS…SVFF), 569–589 (CGGL…APII), and 598–618 (FLHH…ILLL).

This sequence belongs to the major facilitator (TC 2.A.1) superfamily. Organic cation transporter (TC 2.A.1.19) family.

It is found in the membrane. This chain is Solute carrier family 22 member 23 (SLC22A23), found in Homo sapiens (Human).